The following is a 252-amino-acid chain: 5-oxoprolinase subunit A (252 aa).

It belongs to the LamB/PxpA family. As to quaternary structure, forms a complex composed of PxpA, PxpB and PxpC.

The enzyme catalyses 5-oxo-L-proline + ATP + 2 H2O = L-glutamate + ADP + phosphate + H(+). Its function is as follows. Catalyzes the cleavage of 5-oxoproline to form L-glutamate coupled to the hydrolysis of ATP to ADP and inorganic phosphate. This chain is 5-oxoprolinase subunit A, found in Mycolicibacterium paratuberculosis (strain ATCC BAA-968 / K-10) (Mycobacterium paratuberculosis).